We begin with the raw amino-acid sequence, 332 residues long: Probable class II chitinase ARB_00204 (332 aa).

The N-terminal stretch at 1 to 18 (MKTPFTILAALTVATTLA) is a signal peptide. Residues 19 to 331 (DVPDEWDIIE…NPHRKYLDSF (313 aa)) form the GH18 domain. The Proton donor role is filled by glutamate 118. Asparagine 245 carries an N-linked (GlcNAc...) asparagine glycan.

The protein belongs to the glycosyl hydrolase 18 family. Chitinase class II subfamily.

It is found in the secreted. The enzyme catalyses Random endo-hydrolysis of N-acetyl-beta-D-glucosaminide (1-&gt;4)-beta-linkages in chitin and chitodextrins.. In terms of biological role, degrades chitin and chitotriose. The polypeptide is Probable class II chitinase ARB_00204 (Arthroderma benhamiae (strain ATCC MYA-4681 / CBS 112371) (Trichophyton mentagrophytes)).